Here is a 97-residue protein sequence, read N- to C-terminus: Na(+)/H(+) antiporter subunit F1 (97 aa).

Transmembrane regions (helical) follow at residues 3–23 (FKIF…AMLI), 35–55 (VVAL…FSIL), and 60–80 (YMLV…AVFS).

The protein belongs to the CPA3 antiporters (TC 2.A.63) subunit F family. As to quaternary structure, may form a heterooligomeric complex that consists of seven subunits: mnhA1, mnhB1, mnhC1, mnhD1, mnhE1, mnhF1 and mnhG1.

It is found in the cell membrane. Mnh complex is a Na(+)/H(+) antiporter involved in Na(+) excretion. This is Na(+)/H(+) antiporter subunit F1 (mnhF1) from Staphylococcus epidermidis (strain ATCC 35984 / DSM 28319 / BCRC 17069 / CCUG 31568 / BM 3577 / RP62A).